We begin with the raw amino-acid sequence, 129 residues long: Small ribosomal subunit protein uS11 (129 aa).

Part of the 30S ribosomal subunit. Interacts with proteins S7 and S18. Binds to IF-3. In terms of processing, may be methylated on an undetermined residue.

Its function is as follows. Located on the platform of the 30S subunit, it bridges several disparate RNA helices of the 16S rRNA. Forms part of the Shine-Dalgarno cleft in the 70S ribosome. This Rhodopseudomonas palustris (strain ATCC BAA-98 / CGA009) protein is Small ribosomal subunit protein uS11.